The sequence spans 190 residues: Dual-action ribosomal maturation protein DarP (190 aa).

A disordered region spans residues Met-1–His-31.

It belongs to the DarP family.

It localises to the cytoplasm. Member of a network of 50S ribosomal subunit biogenesis factors which assembles along the 30S-50S interface, preventing incorrect 23S rRNA structures from forming. Promotes peptidyl transferase center (PTC) maturation. This Aromatoleum aromaticum (strain DSM 19018 / LMG 30748 / EbN1) (Azoarcus sp. (strain EbN1)) protein is Dual-action ribosomal maturation protein DarP.